A 235-amino-acid chain; its full sequence is Kinetochore protein Spc25 (235 aa).

Residues 44-106 (KNILSAKEAI…DMEAQLLRHT (63 aa)) adopt a coiled-coil conformation. The segment at 193–216 (EVAGASPVTPSGSERPKATSKHSN) is disordered.

Belongs to the SPC25 family. Component of the Ndc80 complex, which is composed of Ndc80, Nuf2 and Spc25.

It is found in the nucleus. Its subcellular location is the chromosome. The protein resides in the centromere. The protein localises to the kinetochore. Acts as a component of the essential kinetochore-associated Ndc80 complex, which is required for chromosome segregation and spindle checkpoint activity during meiosis and mitosis. Required for kinetochore integrity and the organization of stable microtubule binding sites in the outer plate of the kinetochore. Participates in SAC signaling that responds specifically to disruptions in spindle microtubule dynamics. The NDC80 complex synergistically enhances the affinity of the SKA1 complex for microtubules and may allow the NDC80 complex to track depolymerizing microtubules. The polypeptide is Kinetochore protein Spc25 (Drosophila pseudoobscura pseudoobscura (Fruit fly)).